Consider the following 241-residue polypeptide: Phycocyanobilin:ferredoxin oxidoreductase (241 aa).

It belongs to the HY2 family.

The enzyme catalyses (2R,3Z)-phycocyanobilin + 4 oxidized [2Fe-2S]-[ferredoxin] = biliverdin IXalpha + 4 reduced [2Fe-2S]-[ferredoxin] + 4 H(+). Catalyzes the four-electron reduction of biliverdin IX-alpha (2-electron reduction at both the A and D rings); the reaction proceeds via an isolatable 2-electron intermediate, 181,182-dihydrobiliverdin. This is Phycocyanobilin:ferredoxin oxidoreductase from Prochlorococcus marinus (strain MIT 9301).